We begin with the raw amino-acid sequence, 597 residues long: Integrator complex subunit 11 (597 aa).

Zn(2+) contacts are provided by histidine 68, histidine 70, aspartate 72, histidine 73, histidine 157, and aspartate 178. The HXHXDH motif signature appears at 68–73 (HFHLDH). The active site involves glutamate 203. Histidine 414 serves as a coordination point for Zn(2+). 1D-myo-inositol hexakisphosphate is bound at residue lysine 462.

Belongs to the metallo-beta-lactamase superfamily. RNA-metabolizing metallo-beta-lactamase-like family. INTS11 subfamily. As to quaternary structure, belongs to the multiprotein complex Integrator, at least composed of IntS1, IntS2, IntS3, IntS4, omd/IntS5, IntS6, defl/IntS7, IntS8, IntS9, IntS10, IntS11, IntS12, asun/IntS13, IntS14 and IntS15. The core complex associates with protein phosphatase 2A subunits mts/PP2A and Pp2A-29B, to form the Integrator-PP2A (INTAC) complex. IntS11 is part of the RNA endonuclease subcomplex, composed of IntS4, IntS9, IntS11 and inositol hexakisphosphate (InsP6). Interacts with Brat1; interaction is required for the assembly of the RNA endonuclease subcomplex and inhibits the endonuclease activity of IntS11 before formation of mature integrator complex. Zn(2+) serves as cofactor. As to expression, expressed in neurons and glia of the larval and adult brain.

The protein localises to the nucleus. It is found in the cytoplasm. Its subcellular location is the cytosol. The RNA endonuclease activity is inhibited by Brat1 that forms hyrogen bond and hydrophobic interactions with the active site. Its function is as follows. RNA endonuclease component of the integrator complex, a multiprotein complex that terminates RNA polymerase II (Pol II) transcription in the promoter-proximal region of genes. The integrator complex provides a quality checkpoint during transcription elongation by driving premature transcription termination of transcripts that are unfavorably configured for transcriptional elongation: the complex terminates transcription by (1) catalyzing dephosphorylation of the C-terminal domain (CTD) of Pol II subunit Polr2A/Rbp1 and Spt5, and (2) degrading the exiting nascent RNA transcript via endonuclease activity. The integrator complex is also involved in the 3'-end processing of the U7 snRNA, and also the spliceosomal snRNAs U1, U2, U4 and U5. Within the integrator complex, IntS11 constitutes the RNA endonuclease subunit that degrades exiting nascent RNA transcripts. This is Integrator complex subunit 11 from Drosophila melanogaster (Fruit fly).